The primary structure comprises 1355 residues: Phospholipid-transporting ATPase DRS2 (1355 aa).

Over residues methionine 1 to glutamate 15 the composition is skewed to basic and acidic residues. The interval methionine 1 to proline 50 is disordered. The tract at residues methionine 1–arginine 104 is involved in autoinhibition. The Cytoplasmic portion of the chain corresponds to methionine 1–glutamate 221. Residues aspartate 16–aspartate 26 are compositionally biased toward acidic residues. The segment covering serine 30–asparagine 44 has biased composition (polar residues). The residue at position 102 (serine 102) is a Phosphoserine. Residues phenylalanine 222–valine 242 form a helical membrane-spanning segment. Positions glutamine 237–glutamine 238 are involved in phosphatidylserine substrate recognition. Over serine 243 to asparagine 246 the chain is Lumenal. The helical transmembrane segment at arginine 247–isoleucine 267 threads the bilayer. Residues glutamate 268–isoleucine 449 lie on the Cytoplasmic side of the membrane. A helical transmembrane segment spans residues alanine 450–serine 470. The Lumenal portion of the chain corresponds to threonine 471–leucine 490. The helical transmembrane segment at phenylalanine 491–phenylalanine 511 threads the bilayer. The Cytoplasmic segment spans residues valine 512 to isoleucine 1012. Aspartate 560 acts as the 4-aspartylphosphate intermediate in catalysis. ATP-binding residues include aspartate 560, lysine 561, threonine 562, glutamate 655, phenylalanine 698, serine 700, lysine 703, lysine 721, arginine 755, threonine 756, threonine 835, glycine 836, aspartate 837, arginine 928, and lysine 934. Residue aspartate 560 participates in Mg(2+) binding. Threonine 562 lines the Mg(2+) pocket. Aspartate 954 lines the Mg(2+) pocket. The ATP site is built by asparagine 957 and aspartate 958. Aspartate 958 contacts Mg(2+). A helical transmembrane segment spans residues leucine 1013 to asparagine 1033. Over alanine 1034–serine 1043 the chain is Lumenal. A helical transmembrane segment spans residues tryptophan 1044–phenylalanine 1064. Over aspartate 1065 to phenylalanine 1094 the chain is Cytoplasmic. A helical membrane pass occupies residues tryptophan 1095–isoleucine 1115. Over tyrosine 1116–histidine 1131 the chain is Lumenal. A helical membrane pass occupies residues tryptophan 1132 to leucine 1152. An a 1,2-diacyl-sn-glycero-3-phospho-(1D-myo-inositol 4-phosphate)-binding site is contributed by lysine 1149. The Cytoplasmic segment spans residues valine 1153–threonine 1161. A helical transmembrane segment spans residues leucine 1162–isoleucine 1182. Over phenylalanine 1183–serine 1202 the chain is Lumenal. Residues glycine 1203–tryptophan 1223 form a helical membrane-spanning segment. Arginine 1219, tryptophan 1223, lysine 1224, tyrosine 1235, and histidine 1236 together coordinate a 1,2-diacyl-sn-glycero-3-phospho-(1D-myo-inositol 4-phosphate). Over lysine 1224 to isoleucine 1355 the chain is Cytoplasmic. Positions tyrosine 1230–glutamate 1282 are interaction with GEA2. An involved in autoinhibition region spans residues glutamate 1231–alanine 1309. Residues glutamine 1305–isoleucine 1355 are disordered. The segment covering alanine 1307–phenylalanine 1323 has biased composition (polar residues). Residues serine 1346–isoleucine 1355 show a composition bias toward basic and acidic residues.

Belongs to the cation transport ATPase (P-type) (TC 3.A.3) family. Type IV subfamily. Component of a flippase complex consisting of DRS2 and CDC50. Interacts with CDC50; the interaction is direct, is required for their mutual export from the endoplasmic reticulum, and preferentially occurs when DRS2 is in the E2P state. Interacts (via C-terminus) with GEA2 (via SEC7 domain); the interaction is direct. Interacts with GEA1. The cofactor is Mg(2+).

Its subcellular location is the golgi apparatus. It is found in the trans-Golgi network membrane. The protein resides in the endosome membrane. The enzyme catalyses ATP + H2O + phospholipidSide 1 = ADP + phosphate + phospholipidSide 2.. It carries out the reaction a 1,2-diacyl-sn-glycero-3-phospho-L-serine(out) + ATP + H2O = a 1,2-diacyl-sn-glycero-3-phospho-L-serine(in) + ADP + phosphate + H(+). The catalysed reaction is a 1,2-diacyl-sn-glycero-3-phosphoethanolamine(out) + ATP + H2O = a 1,2-diacyl-sn-glycero-3-phosphoethanolamine(in) + ADP + phosphate + H(+). Allosterically activated by binding 1,2-diacyl-sn-glycero-3-phospho-(1D-myo-inositol 4-phosphate) (phosphatidylinositol 4-phosphate). Inhibited by orthovanadate, N-ethylmaleimide, trifluoroberyllate and tetrafluoroaluminate; orthovanadate and N-ethylmaleimide inhibit phosphorylation of the active site aspartic acid. The ATPase activity is not potently stimulated by phosphatidylinositol 3-phosphate and phosphatidylinositol 5-phosphate, phosphatidylinositol 4,5-bisphosphate or phosphatidylcholine. Not inhibited by azide. Functionally, catalytic component of a P4-ATPase flippase complex which catalyzes the hydrolysis of ATP coupled to the transport of phosphatidylserine and small amounts of ethanolamine from the lumen to the cytosolic leaflet of the trans-Golgi network and ensures the maintenance of asymmetric distribution of phospholipids. Contributes to clathrin-coated vesicle formation, endocytosis, and protein trafficking between the Golgi and endosomal system. Does not appear to transport phosphatidylcholine or sphingomyelin. The protein is Phospholipid-transporting ATPase DRS2 of Saccharomyces cerevisiae (strain ATCC 204508 / S288c) (Baker's yeast).